We begin with the raw amino-acid sequence, 172 residues long: 3-hydroxydecanoyl-[acyl-carrier-protein] dehydratase (172 aa).

Residue histidine 71 is part of the active site.

Belongs to the thioester dehydratase family. FabA subfamily. In terms of assembly, homodimer.

Its subcellular location is the cytoplasm. It catalyses the reaction a (3R)-hydroxyacyl-[ACP] = a (2E)-enoyl-[ACP] + H2O. It carries out the reaction (3R)-hydroxydecanoyl-[ACP] = (2E)-decenoyl-[ACP] + H2O. The enzyme catalyses (2E)-decenoyl-[ACP] = (3Z)-decenoyl-[ACP]. It functions in the pathway lipid metabolism; fatty acid biosynthesis. Functionally, necessary for the introduction of cis unsaturation into fatty acids. Catalyzes the dehydration of (3R)-3-hydroxydecanoyl-ACP to E-(2)-decenoyl-ACP and then its isomerization to Z-(3)-decenoyl-ACP. Can catalyze the dehydratase reaction for beta-hydroxyacyl-ACPs with saturated chain lengths up to 16:0, being most active on intermediate chain length. The polypeptide is 3-hydroxydecanoyl-[acyl-carrier-protein] dehydratase (Photorhabdus laumondii subsp. laumondii (strain DSM 15139 / CIP 105565 / TT01) (Photorhabdus luminescens subsp. laumondii)).